A 398-amino-acid polypeptide reads, in one-letter code: 8-amino-7-oxononanoate synthase (398 aa).

Residue Arg-23 coordinates substrate. 110 to 111 provides a ligand contact to pyridoxal 5'-phosphate; that stretch reads GY. Residue His-135 coordinates substrate. Pyridoxal 5'-phosphate is bound by residues Ser-181, His-209, and Thr-238. Residue Lys-241 is modified to N6-(pyridoxal phosphate)lysine. Thr-355 is a binding site for substrate.

It belongs to the class-II pyridoxal-phosphate-dependent aminotransferase family. BioF subfamily. In terms of assembly, homodimer. Pyridoxal 5'-phosphate serves as cofactor.

The catalysed reaction is 6-carboxyhexanoyl-[ACP] + L-alanine + H(+) = (8S)-8-amino-7-oxononanoate + holo-[ACP] + CO2. It participates in cofactor biosynthesis; biotin biosynthesis. Functionally, catalyzes the decarboxylative condensation of pimeloyl-[acyl-carrier protein] and L-alanine to produce 8-amino-7-oxononanoate (AON), [acyl-carrier protein], and carbon dioxide. This is 8-amino-7-oxononanoate synthase from Cellvibrio japonicus (strain Ueda107) (Pseudomonas fluorescens subsp. cellulosa).